A 303-amino-acid chain; its full sequence is 4-sulfomuconolactone hydrolase (303 aa).

Belongs to the metallo-dependent hydrolases superfamily. Sulfomuconolactone hydrolase family. Monomer. Requires Zn(2+) as cofactor.

The catalysed reaction is 4-sulfomuconolactone + H2O = maleylacetate + sulfite + 2 H(+). Its activity is regulated as follows. Completely inhibited by ZnCl(2) and CuCl(2). Involved in the degradation of 4-sulfocatechol which is a central intermediate in the degradation of substituted sulfonated benzenes. Catalyzes the hydrolytical desulfonation of 4-sulfomuconolactone to yield maleylacetate. The sequence is that of 4-sulfomuconolactone hydrolase from Hydrogenophaga intermedia.